The sequence spans 720 residues: NAD(+) hydrolase ApTIR (720 aa).

The TIR domain occupies 1–131; the sequence is MRYDAFISYS…AVPPALRGVF (131 aa). NAD(+) contacts are provided by residues 10–11 and Ala-48; that span reads SH. Glu-84 is a catalytic residue. Residues 192 to 211 traverse the membrane as a helical segment; the sequence is GALAVVCALLLLVAGTAVAW. 2 disordered regions span residues 231–275 and 292–359; these read ATAA…AVAE and EGIA…EEAV. Composition is skewed to basic and acidic residues over residues 256 to 268 and 307 to 359; these read EQQR…EEAR and AEAR…EEAV. Residues 313–362 are a coiled coil; that stretch reads RGVADAEKAKANRAAAEAERQRKIAADEQRKAHEAAAEAERQREEAVKQQ. 7 WD repeats span residues 420–459, 465–504, 510–549, 555–594, 600–639, 645–684, and 690–720; these read GHTA…APRR, SSTA…APRR, GHTD…APRR, DHTA…APRR, and GHTD…CCGM.

The protein localises to the cell membrane. The catalysed reaction is NAD(+) + H2O = ADP-D-ribose + nicotinamide + H(+). NAD(+) hydrolase (NADase) that catalyzes cleavage of NAD(+) into ADP-D-ribose (ADPR) and nicotinamide. The sequence is that of NAD(+) hydrolase ApTIR from Actinoplanes sp. (strain ATCC 31044 / CBS 674.73 / SE50/110).